A 532-amino-acid polypeptide reads, in one-letter code: Di/tripeptide-binding protein 2 (532 aa).

The N-terminal stretch at 1–24 (MRPRSALRYSLLLLAFAASAAIQA) is a signal peptide.

It belongs to the bacterial solute-binding protein 5 family. As to quaternary structure, the complex is composed of two ATP-binding proteins (DppD and DppF), two transmembrane proteins (DppB and DppC) and a solute-binding protein (DppA2). Five orthologous SBPs (DppA1-A5) are present in P.aeruginosa, which increases the substrate specificity of the DppBCDF transporter.

Its function is as follows. Part of the ABC transporter DppABCDF involved in the uptake of various di/tripeptides. Shows high flexibility on substrate recognition. Efficiently uses tripeptides. The chain is Di/tripeptide-binding protein 2 from Pseudomonas aeruginosa (strain UCBPP-PA14).